We begin with the raw amino-acid sequence, 1020 residues long: Contactin-1 (1020 aa).

The N-terminal stretch at 1-20 is a signal peptide; sequence MKMPLLVSHLLLISLTSCLG. Ig-like C2-type domains follow at residues 41–131, 137–223, 241–326, 331–407, 413–500, and 504–603; these read PIFE…ATLS, PFPP…KSVF, PADI…ARIY, PEWV…AELK, PTFE…GTLV, and PTRI…LVVR. Disulfide bonds link Cys65–Cys114 and Cys158–Cys211. 2 N-linked (GlcNAc...) asparagine glycosylation sites follow: Asn208 and Asn258. An intrachain disulfide couples Cys263 to Cys310. Asn338 is a glycosylation site (N-linked (GlcNAc...) asparagine). 2 disulfides stabilise this stretch: Cys352–Cys391 and Cys436–Cys484. Asn457, Asn473, Asn494, and Asn521 each carry an N-linked (GlcNAc...) asparagine glycan. Cys526 and Cys585 are disulfide-bonded. N-linked (GlcNAc...) asparagine glycosylation occurs at Asn593. 4 consecutive Fibronectin type-III domains span residues 608-706, 711-808, 813-908, and 909-1002; these read PPGG…TDGA, APSD…SAQD, APTE…APPS, and QPPR…TLSS. Positions 695–719 are disordered; it reads SIPSNRIKTDGAAPNVAPSDVGGGG. An N-linked (GlcNAc...) asparagine glycan is attached at Asn935. The GPI-anchor amidated serine moiety is linked to residue Ser1001. Residues 1002-1020 constitute a propeptide, removed in mature form; that stretch reads SSLLSLLLPSLGFLVYSEF.

Belongs to the immunoglobulin superfamily. Contactin family. In terms of assembly, monomer. Interacts with CNTNAP1 in cis form. Binds to the carbonic-anhydrase like domain of PTPRZ1. Interacts with NOTCH1 and TNR. Detected in a complex with NRCAM and PTPRB. Interacts with TASOR. In terms of tissue distribution, expressed in the ovary and in Sertoli cells of the testis.

The protein localises to the cell membrane. Functionally, contactins mediate cell surface interactions during nervous system development. Involved in the formation of paranodal axo-glial junctions in myelinated peripheral nerves and in the signaling between axons and myelinating glial cells via its association with CNTNAP1. Participates in oligodendrocytes generation by acting as a ligand of NOTCH1. Its association with NOTCH1 promotes NOTCH1 activation through the released notch intracellular domain (NICD) and subsequent translocation to the nucleus. Interaction with TNR induces a repulsion of neurons and an inhibition of neurite outgrowth. This is Contactin-1 (Cntn1) from Mus musculus (Mouse).